Reading from the N-terminus, the 155-residue chain is Putative pre-16S rRNA nuclease (155 aa).

It belongs to the YqgF nuclease family.

It localises to the cytoplasm. Its function is as follows. Could be a nuclease involved in processing of the 5'-end of pre-16S rRNA. The sequence is that of Putative pre-16S rRNA nuclease from Xanthomonas oryzae pv. oryzae (strain MAFF 311018).